Reading from the N-terminus, the 122-residue chain is Large ribosomal subunit protein uL14 (122 aa).

It belongs to the universal ribosomal protein uL14 family. Part of the 50S ribosomal subunit. Forms a cluster with proteins L3 and L19. In the 70S ribosome, L14 and L19 interact and together make contacts with the 16S rRNA in bridges B5 and B8.

Functionally, binds to 23S rRNA. Forms part of two intersubunit bridges in the 70S ribosome. The sequence is that of Large ribosomal subunit protein uL14 from Mycobacterium tuberculosis (strain ATCC 25177 / H37Ra).